Reading from the N-terminus, the 559-residue chain is Sulfite reductase [NADPH] hemoprotein beta-component (559 aa).

[4Fe-4S] cluster is bound by residues C423, C429, C468, and C472. C472 provides a ligand contact to siroheme.

Belongs to the nitrite and sulfite reductase 4Fe-4S domain family. Alpha(8)-beta(8). The alpha component is a flavoprotein, the beta component is a hemoprotein. The cofactor is siroheme. It depends on [4Fe-4S] cluster as a cofactor.

It carries out the reaction hydrogen sulfide + 3 NADP(+) + 3 H2O = sulfite + 3 NADPH + 4 H(+). Its pathway is sulfur metabolism; hydrogen sulfide biosynthesis; hydrogen sulfide from sulfite (NADPH route): step 1/1. Its function is as follows. Component of the sulfite reductase complex that catalyzes the 6-electron reduction of sulfite to sulfide. This is one of several activities required for the biosynthesis of L-cysteine from sulfate. The protein is Sulfite reductase [NADPH] hemoprotein beta-component of Thiocapsa roseopersicina.